Consider the following 141-residue polypeptide: Large ribosomal subunit protein uL11 (141 aa).

Belongs to the universal ribosomal protein uL11 family. In terms of assembly, part of the ribosomal stalk of the 50S ribosomal subunit. Interacts with L10 and the large rRNA to form the base of the stalk. L10 forms an elongated spine to which L12 dimers bind in a sequential fashion forming a multimeric L10(L12)X complex. Post-translationally, one or more lysine residues are methylated.

Forms part of the ribosomal stalk which helps the ribosome interact with GTP-bound translation factors. The protein is Large ribosomal subunit protein uL11 of Crocosphaera subtropica (strain ATCC 51142 / BH68) (Cyanothece sp. (strain ATCC 51142)).